The sequence spans 302 residues: MQFDELLTEQRNHRSTHIDRESTLEMVATINREDHRVARAVQKELPQIAAAIDAAYPKFDQGGRLIYVGAGTSGRLGVMDATEIQPTYGLTAEQTFGLIAGGEPALTHTVKAAEDSIELAQEDLAAVQLTAQDIVVASAASGQTPYTLAALQYAQEKGALGIGFSCVEDSPLAQLANYPITPVVGPEVITGATLLKAGTAEKMVLNMLSTGIMVKSGKVYQNLMINVVPTNGKTFERAKKIIAEATQTSLLAAERALERANNHVPLAIVLIETKGTIAEAKALLAATNGHVSQAVKLNDKQH.

Residues 55–218 form the SIS domain; that stretch reads AYPKFDQGGR…STGIMVKSGK (164 aa). The active-site Proton donor is the E83. E114 is a catalytic residue.

This sequence belongs to the GCKR-like family. MurNAc-6-P etherase subfamily. As to quaternary structure, homodimer.

It carries out the reaction N-acetyl-D-muramate 6-phosphate + H2O = N-acetyl-D-glucosamine 6-phosphate + (R)-lactate. It participates in amino-sugar metabolism; N-acetylmuramate degradation. Its function is as follows. Specifically catalyzes the cleavage of the D-lactyl ether substituent of MurNAc 6-phosphate, producing GlcNAc 6-phosphate and D-lactate. In Levilactobacillus brevis (strain ATCC 367 / BCRC 12310 / CIP 105137 / JCM 1170 / LMG 11437 / NCIMB 947 / NCTC 947) (Lactobacillus brevis), this protein is N-acetylmuramic acid 6-phosphate etherase.